The following is a 59-amino-acid chain: MSSIDYLVNNCDYKVSAFSLNDGQRSNSIQPVSQNDQEMCYLGDIDYGCTIIYPNGKKH.

This is an uncharacterized protein from Dictyostelium discoideum (Social amoeba).